The chain runs to 262 residues: Taurine import ATP-binding protein TauB (262 aa).

Residues 4–234 form the ABC transporter domain; the sequence is VDHASVFFAA…RFAETGDARS (231 aa). 39–46 contributes to the ATP binding site; sequence GASGCGKS.

Belongs to the ABC transporter superfamily. Taurine importer (TC 3.A.1.17.1) family. The complex is composed of two ATP-binding proteins (TauB), two transmembrane proteins (TauC) and a solute-binding protein (TauA).

The protein resides in the cell inner membrane. The enzyme catalyses taurine(out) + ATP + H2O = taurine(in) + ADP + phosphate + H(+). Functionally, part of the ABC transporter complex TauABC involved in taurine import. Responsible for energy coupling to the transport system. This Rhizobium johnstonii (strain DSM 114642 / LMG 32736 / 3841) (Rhizobium leguminosarum bv. viciae) protein is Taurine import ATP-binding protein TauB.